Here is a 244-residue protein sequence, read N- to C-terminus: Probable transcriptional regulatory protein MMOB1910 (244 aa).

Belongs to the TACO1 family.

The protein localises to the cytoplasm. In Mycoplasma mobile (strain ATCC 43663 / 163K / NCTC 11711) (Mesomycoplasma mobile), this protein is Probable transcriptional regulatory protein MMOB1910.